Reading from the N-terminus, the 466-residue chain is Adenosylhomocysteinase (466 aa).

Substrate-binding residues include Thr57, Asp132, and Glu192. Residue 193 to 195 (TTT) participates in NAD(+) binding. Residues Lys222 and Asp226 each contribute to the substrate site. Residues Asn227, 256-261 (GYGDVG), Glu279, Asn314, 335-337 (IGH), and Asn380 each bind NAD(+).

This sequence belongs to the adenosylhomocysteinase family. NAD(+) is required as a cofactor.

It is found in the cytoplasm. It carries out the reaction S-adenosyl-L-homocysteine + H2O = L-homocysteine + adenosine. It participates in amino-acid biosynthesis; L-homocysteine biosynthesis; L-homocysteine from S-adenosyl-L-homocysteine: step 1/1. Its function is as follows. May play a key role in the regulation of the intracellular concentration of adenosylhomocysteine. In Sinorhizobium medicae (strain WSM419) (Ensifer medicae), this protein is Adenosylhomocysteinase.